Consider the following 222-residue polypeptide: 2-C-methyl-D-erythritol 4-phosphate cytidylyltransferase (222 aa).

The protein belongs to the IspD/TarI cytidylyltransferase family. IspD subfamily.

It carries out the reaction 2-C-methyl-D-erythritol 4-phosphate + CTP + H(+) = 4-CDP-2-C-methyl-D-erythritol + diphosphate. Its pathway is isoprenoid biosynthesis; isopentenyl diphosphate biosynthesis via DXP pathway; isopentenyl diphosphate from 1-deoxy-D-xylulose 5-phosphate: step 2/6. Functionally, catalyzes the formation of 4-diphosphocytidyl-2-C-methyl-D-erythritol from CTP and 2-C-methyl-D-erythritol 4-phosphate (MEP). This chain is 2-C-methyl-D-erythritol 4-phosphate cytidylyltransferase, found in Thermotoga neapolitana (strain ATCC 49049 / DSM 4359 / NBRC 107923 / NS-E).